Here is a 59-residue protein sequence, read N- to C-terminus: Protein B3 (59 aa).

The protein is Protein B3 (B3) of Homo sapiens (Human).